The chain runs to 772 residues: Phosphoribosylformylglycinamidine synthase subunit PurL (772 aa).

Residue His-62 is part of the active site. ATP contacts are provided by Tyr-65 and Lys-109. Position 111 (Glu-111) interacts with Mg(2+). Substrate-binding positions include 112-115 and Arg-134; that span reads SHNH. The active-site Proton acceptor is the His-113. Asp-135 is a Mg(2+) binding site. Gln-259 is a binding site for substrate. Residue Asp-287 participates in Mg(2+) binding. 331–333 is a substrate binding site; that stretch reads ESQ. Residues Asp-519 and Gly-556 each coordinate ATP. Position 557 (Asn-557) interacts with Mg(2+). Ser-559 contacts substrate.

Belongs to the FGAMS family. In terms of assembly, monomer. Part of the FGAM synthase complex composed of 1 PurL, 1 PurQ and 2 PurS subunits.

It is found in the cytoplasm. The catalysed reaction is N(2)-formyl-N(1)-(5-phospho-beta-D-ribosyl)glycinamide + L-glutamine + ATP + H2O = 2-formamido-N(1)-(5-O-phospho-beta-D-ribosyl)acetamidine + L-glutamate + ADP + phosphate + H(+). Its pathway is purine metabolism; IMP biosynthesis via de novo pathway; 5-amino-1-(5-phospho-D-ribosyl)imidazole from N(2)-formyl-N(1)-(5-phospho-D-ribosyl)glycinamide: step 1/2. In terms of biological role, part of the phosphoribosylformylglycinamidine synthase complex involved in the purines biosynthetic pathway. Catalyzes the ATP-dependent conversion of formylglycinamide ribonucleotide (FGAR) and glutamine to yield formylglycinamidine ribonucleotide (FGAM) and glutamate. The FGAM synthase complex is composed of three subunits. PurQ produces an ammonia molecule by converting glutamine to glutamate. PurL transfers the ammonia molecule to FGAR to form FGAM in an ATP-dependent manner. PurS interacts with PurQ and PurL and is thought to assist in the transfer of the ammonia molecule from PurQ to PurL. The sequence is that of Phosphoribosylformylglycinamidine synthase subunit PurL from Leifsonia xyli subsp. xyli (strain CTCB07).